The chain runs to 308 residues: Ribosomal RNA small subunit methyltransferase H (308 aa).

S-adenosyl-L-methionine-binding positions include 32–34 (GGH), Asp-52, Phe-78, Asp-100, and Gln-107.

This sequence belongs to the methyltransferase superfamily. RsmH family.

It is found in the cytoplasm. The catalysed reaction is cytidine(1402) in 16S rRNA + S-adenosyl-L-methionine = N(4)-methylcytidine(1402) in 16S rRNA + S-adenosyl-L-homocysteine + H(+). In terms of biological role, specifically methylates the N4 position of cytidine in position 1402 (C1402) of 16S rRNA. This Legionella pneumophila (strain Paris) protein is Ribosomal RNA small subunit methyltransferase H.